The following is a 415-amino-acid chain: S-inosyl-L-homocysteine hydrolase (415 aa).

D123 and E148 together coordinate substrate. Position 149 to 151 (149 to 151) interacts with NAD(+); that stretch reads TTT. The substrate site is built by K178 and D182. Residues N183, 212–217, E235, 291–293, and N337 each bind NAD(+); these read GYGWCG and AGH.

Belongs to the adenosylhomocysteinase family. Exists both as a homotetramer and a homodimer, in a 4:1 ratio. The cofactor is NAD(+).

It localises to the cytoplasm. The catalysed reaction is S-inosyl-L-homocysteine + H2O = L-homocysteine + inosine. The protein operates within amino-acid biosynthesis; S-adenosyl-L-methionine biosynthesis. Its function is as follows. Catalyzes the hydrolysis of S-inosyl-L-homocysteine (SIH) to L-homocysteine (Hcy) and inosine. Likely functions in a S-adenosyl-L-methionine (SAM) recycling pathway from S-adenosyl-L-homocysteine (SAH) produced from SAM-dependent methylation reactions. Can also catalyze the reverse reaction in vitro, i.e. the synthesis of SIH from Hcy and inosine. Is specific for SIH and inosine as it is unable to either hydrolyze SAH or synthesize SAH from adenosine and Hcy. In Methanocaldococcus jannaschii (strain ATCC 43067 / DSM 2661 / JAL-1 / JCM 10045 / NBRC 100440) (Methanococcus jannaschii), this protein is S-inosyl-L-homocysteine hydrolase.